Reading from the N-terminus, the 718-residue chain is F-box/LRR-repeat protein 18 (718 aa).

Positions 25–72 (GVHLLGFSDEILLHILSHVPSTDLILNVRRTCRKLAALCLDKSLIHTV) constitute an F-box domain. LRR repeat units lie at residues 77-103 (DYQA…SMAG), 104-128 (CYWL…NLSG), 129-153 (CHLT…AIDV), 177-201 (KQTL…LLYF), 324-352 (CTLS…NLSG), 367-392 (EDDI…NLSA), 393-422 (AHHH…SLPV), 468-492 (CPQP…ELIG), 516-540 (AQSV…TLAQ), 542-567 (PSVL…SLAN), 572-597 (GKVV…RLEQ), and 599-623 (YFSA…CLVS).

In terms of assembly, directly interacts with SKP1 and CUL1.

In terms of biological role, substrate-recognition component of the SCF (SKP1-CUL1-F-box protein)-type E3 ubiquitin ligase complex. The protein is F-box/LRR-repeat protein 18 (FBXL18) of Homo sapiens (Human).